Consider the following 335-residue polypeptide: Glyceraldehyde-3-phosphate dehydrogenase 2 (335 aa).

Residues 13 to 14 and G111 each bind NAD(+); that span reads TI. Residue 140 to 142 coordinates D-glyceraldehyde 3-phosphate; sequence SCN. The active-site Nucleophile is C141. An NAD(+)-binding site is contributed by R169. Residues T171 and 195–196 contribute to the D-glyceraldehyde 3-phosphate site; that span reads HG. Q300 contributes to the NAD(+) binding site.

This sequence belongs to the glyceraldehyde-3-phosphate dehydrogenase family. In terms of assembly, homotetramer.

The protein localises to the cytoplasm. The enzyme catalyses D-glyceraldehyde 3-phosphate + phosphate + NADP(+) = (2R)-3-phospho-glyceroyl phosphate + NADPH + H(+). It catalyses the reaction D-glyceraldehyde 3-phosphate + phosphate + NAD(+) = (2R)-3-phospho-glyceroyl phosphate + NADH + H(+). It functions in the pathway carbohydrate degradation; glycolysis; pyruvate from D-glyceraldehyde 3-phosphate: step 1/5. The sequence is that of Glyceraldehyde-3-phosphate dehydrogenase 2 (gapB) from Methanosarcina acetivorans (strain ATCC 35395 / DSM 2834 / JCM 12185 / C2A).